The sequence spans 204 residues: Proteasome subunit beta type-2-A (204 aa).

Met-1 carries the post-translational modification N-acetylmethionine.

This sequence belongs to the peptidase T1B family. As to quaternary structure, component of the 20S core complex of the 26S proteasome. The 26S proteasome is composed of a core protease (CP), known as the 20S proteasome, capped at one or both ends by the 19S regulatory particle (RP/PA700). The 20S proteasome core is composed of 28 subunits that are arranged in four stacked rings, resulting in a barrel-shaped structure. The two end rings are each formed by seven alpha subunits, and the two central rings are each formed by seven beta subunits. The catalytic chamber with the active sites is on the inside of the barrel.

The protein localises to the cytoplasm. The protein resides in the nucleus. In terms of biological role, non-catalytic component of the proteasome, a multicatalytic proteinase complex which is characterized by its ability to cleave peptides with Arg, Phe, Tyr, Leu, and Glu adjacent to the leaving group at neutral or slightly basic pH. The proteasome has an ATP-dependent proteolytic activity. In Arabidopsis thaliana (Mouse-ear cress), this protein is Proteasome subunit beta type-2-A (PBD1).